A 606-amino-acid chain; its full sequence is Sporulation kinase A (606 aa).

The PAS 1 domain occupies 3–73 (QDTQHVKPLQ…SYFYNEHHLM (71 aa)). One can recognise a PAC 1 domain in the interval 77–116 (FRFIKKDHTIVWVEAAVEIVTTRAERTEREIILKMKVLEE). The PAS 2 domain occupies 140-214 (YITDDYERLV…IRMQKGMEVG (75 aa)). The 38-residue stretch at 218 to 255 (QTWKRLDGTPVHLEVKASPTVYKNQQAELLLLIDISSR) folds into the PAC 2 domain. The 71-residue stretch at 265–335 (SRERYQLLIQ…ERIQNIAEQK (71 aa)) folds into the PAS 3 domain. The 205-residue stretch at 402–606 (GIAHEIRNPL…TAFKISFPKK (205 aa)) folds into the Histidine kinase domain. At histidine 405 the chain carries Phosphohistidine; by autocatalysis.

It catalyses the reaction ATP + protein L-histidine = ADP + protein N-phospho-L-histidine.. Its function is as follows. Phosphorylates the sporulation-regulatory proteins spo0A and spo0F. It also autophosphorylates in the presence of ATP. The polypeptide is Sporulation kinase A (kinA) (Bacillus subtilis (strain 168)).